Here is a 329-residue protein sequence, read N- to C-terminus: DNA-directed RNA polymerase subunit alpha (329 aa).

An alpha N-terminal domain (alpha-NTD) region spans residues 1–235 (MQGSVTEFLK…EQLDAFVDLR (235 aa)). Positions 249-329 (FDPILLRPVD…NWPPASIAED (81 aa)) are alpha C-terminal domain (alpha-CTD).

This sequence belongs to the RNA polymerase alpha chain family. In terms of assembly, homodimer. The RNAP catalytic core consists of 2 alpha, 1 beta, 1 beta' and 1 omega subunit. When a sigma factor is associated with the core the holoenzyme is formed, which can initiate transcription.

The catalysed reaction is RNA(n) + a ribonucleoside 5'-triphosphate = RNA(n+1) + diphosphate. Its function is as follows. DNA-dependent RNA polymerase catalyzes the transcription of DNA into RNA using the four ribonucleoside triphosphates as substrates. The chain is DNA-directed RNA polymerase subunit alpha from Histophilus somni (strain 129Pt) (Haemophilus somnus).